The chain runs to 783 residues: MDAIKCSSSFLHHTKLNTLFSNHTFPKISAPNFKPLFRPISISAKDRRSNEAENIAVVEKPLKSDRFFISDGLPSPFGPTVRDDGVNFSVYSTNSVSATICLISLSDLRQNKVTEEIQLDPSRNRTGHVWHVFLRGDFKDMLYGYRFDGKFSPEEGHYYDSSNILLDPYAKAIISRDEFGVLGPDDNCWPQMACMVPTREEEFDWEGDMHLKLPQKDLVIYEMHVRGFTRHESSKIEFPGTYQGVAEKLDHLKELGINCIELMPCHEFNELEYYSYNTILGDHRVNFWGYSTIGFFSPMIRYASASSNNFAGRAINEFKILVKEAHKRGIEVIMDVVLNHTAEGNEKGPIFSFRGVDNSVYYMLAPKGEFYNYSGCGNTFNCNHPVVRQFILDCLRYWVTEMHVDGFRFDLGSIMSRSSSLWDAANVYGADVEGDLLTTGTPISCPPVIDMISNDPILRGVKLIAEAWDAGGLYQVGMFPHWGIWSEWNGKFRDVVRQFIKGTDGFSGAFAECLCGSPNLYQGGRKPWHSINFICAHDGFTLADLVTYNNKNNLANGEENNDGENHNYSWNCGEEGDFASISVKRLRKRQMRNFFVSLMVSQGVPMIYMGDEYGHTKGGNNNTYCHDNYMNYFRWDKKEEAHSDFFRFCRILIKFRDECESLGLNDFPTAKRLQWHGLAPEIPNWSETSRFVAFSLVDSVKKEIYVAFNTSHLATLVSLPNRPGYRWEPFVDTSKPSPYDCITPDLPERETAMKQYRHFLDANVYPMLSYSSIILLLSPIKDP.

The N-terminal 43 residues, 1 to 43, are a transit peptide targeting the chloroplast; the sequence is MDAIKCSSSFLHHTKLNTLFSNHTFPKISAPNFKPLFRPISIS. The active-site Nucleophile is the aspartate 410. Glutamate 466 acts as the Proton donor in catalysis.

Belongs to the glycosyl hydrolase 13 family. As to quaternary structure, associates with ISA2 to form the heteromultimeric complex Iso1 required for amylopectin synthesis.

It is found in the plastid. The protein localises to the chloroplast. It catalyses the reaction Hydrolysis of (1-&gt;6)-alpha-D-glucosidic branch linkages in glycogen, amylopectin and their beta-limit dextrins.. The protein operates within glycan biosynthesis; starch biosynthesis. Involved in the trimming of pre-amylopectin chains. Accelerates the crystallization of nascent amylopectin molecules during starch synthesis. ISA1 and ISA2 work exclusively together as a multimeric holoenzyme. ISA1-ISA2 removes preferentially branches that are very close to other branches. Promotes negative gravitropic responses in shoots by facilitating starch granules (statoliths) formation in hypocotyls. The sequence is that of Isoamylase 1, chloroplastic from Arabidopsis thaliana (Mouse-ear cress).